The following is a 32-amino-acid chain: Small ribosomal subunit protein uS19 (32 aa).

The protein belongs to the universal ribosomal protein uS19 family.

In terms of biological role, protein S19 forms a complex with S13 that binds strongly to the 16S ribosomal RNA. This Yersinia enterocolitica protein is Small ribosomal subunit protein uS19 (rpsS).